We begin with the raw amino-acid sequence, 103 residues long: Defensin-like protein 290 (103 aa).

A signal peptide spans 1 to 29 (MTALRRTISIIFVFYLSCTLFVNIFGVQA). Disulfide bonds link cysteine 33–cysteine 50, cysteine 39–cysteine 55, cysteine 43–cysteine 57, cysteine 72–cysteine 92, cysteine 78–cysteine 98, and cysteine 84–cysteine 100.

Belongs to the DEFL family.

Its subcellular location is the secreted. The chain is Defensin-like protein 290 from Arabidopsis thaliana (Mouse-ear cress).